A 359-amino-acid chain; its full sequence is UDP-N-acetylglucosamine--N-acetylmuramyl-(pentapeptide) pyrophosphoryl-undecaprenol N-acetylglucosamine transferase (359 aa).

UDP-N-acetyl-alpha-D-glucosamine contacts are provided by residues 15–17, asparagine 127, arginine 166, serine 191, isoleucine 245, 264–269, and glutamine 290; these read TGG and ALTVSE.

It belongs to the glycosyltransferase 28 family. MurG subfamily.

It localises to the cell inner membrane. The catalysed reaction is di-trans,octa-cis-undecaprenyl diphospho-N-acetyl-alpha-D-muramoyl-L-alanyl-D-glutamyl-meso-2,6-diaminopimeloyl-D-alanyl-D-alanine + UDP-N-acetyl-alpha-D-glucosamine = di-trans,octa-cis-undecaprenyl diphospho-[N-acetyl-alpha-D-glucosaminyl-(1-&gt;4)]-N-acetyl-alpha-D-muramoyl-L-alanyl-D-glutamyl-meso-2,6-diaminopimeloyl-D-alanyl-D-alanine + UDP + H(+). It functions in the pathway cell wall biogenesis; peptidoglycan biosynthesis. In terms of biological role, cell wall formation. Catalyzes the transfer of a GlcNAc subunit on undecaprenyl-pyrophosphoryl-MurNAc-pentapeptide (lipid intermediate I) to form undecaprenyl-pyrophosphoryl-MurNAc-(pentapeptide)GlcNAc (lipid intermediate II). In Pseudomonas putida (strain W619), this protein is UDP-N-acetylglucosamine--N-acetylmuramyl-(pentapeptide) pyrophosphoryl-undecaprenol N-acetylglucosamine transferase.